The following is an 82-amino-acid chain: Escargot/snail protein homolog (82 aa).

C2H2-type zinc fingers lie at residues 1–5 (HLQFH), 18–40 (FSCKLCDKVYTSLGALKMHIRTH), 44–66 (CKCDICHKAFSRPWLLQGHIRTH), and 72–82 (FSCQHCHRAFA).

It belongs to the snail C2H2-type zinc-finger protein family.

The protein resides in the nucleus. The protein is Escargot/snail protein homolog of Bradysia coprophila (Dark-winged fungus gnat).